A 27-amino-acid chain; its full sequence is Ranatuerin-2Cb (27 aa).

Residues Cys-20 and Cys-25 are joined by a disulfide bond.

Expressed by the skin glands.

The protein localises to the secreted. Antibacterial activity against Gram-positive bacterium S.aureus (MIC=40 uM) and Gram-negative bacterium E.coli (MIC=2 uM). Has activity against C.albicans (MIC=46 uM). The protein is Ranatuerin-2Cb of Lithobates clamitans (Green frog).